A 101-amino-acid chain; its full sequence is MSQQPPAVGVPPSHAYPAEGPPKDAYPPPGQPYPQQGYPPPQGYPQQGYPPQGYPPQGYPEQGYPQQGYPPQQQQQQKHSPGMLEGCIAALCCYCVLDACF.

Residues Met-1–Ser-80 are disordered. A compositionally biased stretch (pro residues) spans Asp-24–Gly-43. The span at Tyr-59–Gln-77 shows a compositional bias: low complexity. The chain crosses the membrane as a helical span at residues Lys-78–Cys-95.

The protein belongs to the CYSTM1 family.

The protein resides in the membrane. This is Cysteine-rich and transmembrane domain-containing protein B from Arabidopsis thaliana (Mouse-ear cress).